A 248-amino-acid chain; its full sequence is Tabserin (248 aa).

The signal sequence occupies residues 1–19; the sequence is MLKYSALFLYLIYVGGSES. The region spanning 24–248 is the Peptidase S1 domain; it reads IVGGVPVAEE…PYFENGLRKR (225 aa). A disulfide bond links Cys49 and Cys65. Residues His64 and Asp111 each act as charge relay system in the active site. 2 disulfide bridges follow: Cys175/Cys189 and Cys201/Cys226. Ser205 (charge relay system) is an active-site residue.

The protein belongs to the peptidase S1 family. Expressed in salivary glands.

It localises to the secreted. Serine protease that inhibits blood coagulation in a dose-dependent manner. May act by destroying coagulant factors to inhibit blood coagulation. The protein is Tabserin of Tabanus yao (Horsefly).